We begin with the raw amino-acid sequence, 950 residues long: Protocadherin alpha-3 (950 aa).

The signal sequence occupies residues 1–29 (MLFSWREDPGAQCLLLSLLLLAASEVGSG). 6 Cadherin domains span residues 30-133 (QLHY…APVF), 134-242 (PMAV…APAF), 243-350 (ERTI…VPEL), 351-455 (VIQS…APAF), 456-565 (SQSE…APAL), and 581-678 (VPRS…APKA). Topologically, residues 30–697 (QLHYSVSEEA…GPEAALVDVN (668 aa)) are extracellular. Residues Asn-257 and Asn-265 are each glycosylated (N-linked (GlcNAc...) asparagine). N-linked (GlcNAc...) asparagine glycosylation is present at Asn-548. A helical membrane pass occupies residues 698–718 (VYLIVAICAVSSLLVLTLLLY). Residues 719 to 950 (TALRCSAPPT…GNSTTDNSDQ (232 aa)) are Cytoplasmic-facing. PXXP repeat units follow at residues 734–737 (PGKP) and 774–777 (PSLP). The 6 X 4 AA repeats of P-X-X-P stretch occupies residues 734-894 (PGKPTLVCSS…PDKFIIPGSP (161 aa)). Disordered regions lie at residues 777-806 (PPCPISRDREEKQDVDVDLSAKPRQPNPDW), 831-856 (GPGGPDQQWPTVSSATPEPEAGEVSP), and 869-950 (FKYG…NSDQ). Positions 782–797 (SRDREEKQDVDVDLSA) are enriched in basic and acidic residues. 4 PXXP repeats span residues 799-802 (PRQP), 832-835 (PGGP), 873-876 (PGNP), and 891-894 (PGSP). Basic and acidic residues predominate over residues 909–923 (DKSDFITFGKKEETK).

It is found in the cell membrane. Its function is as follows. Potential calcium-dependent cell-adhesion protein. May be involved in the establishment and maintenance of specific neuronal connections in the brain. This Homo sapiens (Human) protein is Protocadherin alpha-3 (PCDHA3).